The chain runs to 360 residues: Histidinol-phosphate aminotransferase (360 aa).

K211 is subject to N6-(pyridoxal phosphate)lysine.

The protein belongs to the class-II pyridoxal-phosphate-dependent aminotransferase family. Histidinol-phosphate aminotransferase subfamily. As to quaternary structure, homodimer. It depends on pyridoxal 5'-phosphate as a cofactor.

It catalyses the reaction L-histidinol phosphate + 2-oxoglutarate = 3-(imidazol-4-yl)-2-oxopropyl phosphate + L-glutamate. It participates in amino-acid biosynthesis; L-histidine biosynthesis; L-histidine from 5-phospho-alpha-D-ribose 1-diphosphate: step 7/9. The polypeptide is Histidinol-phosphate aminotransferase (Cronobacter sakazakii (strain ATCC BAA-894) (Enterobacter sakazakii)).